The following is a 211-amino-acid chain: Claudin-13 (211 aa).

The Cytoplasmic portion of the chain corresponds to 1–8 (MVVSKQEA). The helical transmembrane segment at 9-29 (ISFSVTSLGWVGAIVSCVLPV) threads the bilayer. At 30–80 (WRVTFPDDETDPDATIWEGLWHICQVRENRWIQCTLYDTRILVAQDIKVSR) the chain is on the extracellular side. Residues 81-101 (VFMVICTIGTWLGLLLCVLGD) traverse the membrane as a helical segment. At 102-118 (WRINCFMNFTIEENLLK) the chain is on the cytoplasmic side. Residues 119 to 139 (VAGGMFLSVGLLMLVPLSWVT) traverse the membrane as a helical segment. At 140 to 165 (HNIIHGFFNPLLGFSKKVQMGSSLSL) the chain is on the extracellular side. A helical transmembrane segment spans residues 166–186 (AWTSSLLLLLGGILLCVNIPV). The Cytoplasmic portion of the chain corresponds to 187-211 (CRDFPRCIETPSARPSGANNDTLDV).

Belongs to the claudin family.

The protein localises to the cell junction. It is found in the tight junction. The protein resides in the cell membrane. Functionally, plays a major role in tight junction-specific obliteration of the intercellular space, through calcium-independent cell-adhesion activity. The polypeptide is Claudin-13 (Cldn13) (Mus musculus (Mouse)).